Here is a 126-residue protein sequence, read N- to C-terminus: Large ribosomal subunit protein bL12 (126 aa).

The protein belongs to the bacterial ribosomal protein bL12 family. Homodimer. Part of the ribosomal stalk of the 50S ribosomal subunit. Forms a multimeric L10(L12)X complex, where L10 forms an elongated spine to which 2 to 4 L12 dimers bind in a sequential fashion. Binds GTP-bound translation factors.

Its function is as follows. Forms part of the ribosomal stalk which helps the ribosome interact with GTP-bound translation factors. Is thus essential for accurate translation. This chain is Large ribosomal subunit protein bL12, found in Tropheryma whipplei (strain TW08/27) (Whipple's bacillus).